The following is a 231-amino-acid chain: Probable methylthioribulose-1-phosphate dehydratase (231 aa).

Substrate is bound at residue Cys90. Residues His108 and His110 each coordinate Zn(2+). Residue Glu132 is the Proton donor/acceptor of the active site. His188 contacts Zn(2+).

This sequence belongs to the aldolase class II family. MtnB subfamily. The cofactor is Zn(2+).

It localises to the cytoplasm. It catalyses the reaction 5-(methylsulfanyl)-D-ribulose 1-phosphate = 5-methylsulfanyl-2,3-dioxopentyl phosphate + H2O. It functions in the pathway amino-acid biosynthesis; L-methionine biosynthesis via salvage pathway; L-methionine from S-methyl-5-thio-alpha-D-ribose 1-phosphate: step 2/6. Catalyzes the dehydration of methylthioribulose-1-phosphate (MTRu-1-P) into 2,3-diketo-5-methylthiopentyl-1-phosphate (DK-MTP-1-P). In Anopheles gambiae (African malaria mosquito), this protein is Probable methylthioribulose-1-phosphate dehydratase.